Consider the following 201-residue polypeptide: Orotate phosphoribosyltransferase (201 aa).

Residues lysine 90 and glutamate 113–serine 121 contribute to the 5-phospho-alpha-D-ribose 1-diphosphate site. Threonine 117 and arginine 145 together coordinate orotate.

The protein belongs to the purine/pyrimidine phosphoribosyltransferase family. PyrE subfamily. As to quaternary structure, homodimer. Mg(2+) serves as cofactor.

The catalysed reaction is orotidine 5'-phosphate + diphosphate = orotate + 5-phospho-alpha-D-ribose 1-diphosphate. The protein operates within pyrimidine metabolism; UMP biosynthesis via de novo pathway; UMP from orotate: step 1/2. Its function is as follows. Catalyzes the transfer of a ribosyl phosphate group from 5-phosphoribose 1-diphosphate to orotate, leading to the formation of orotidine monophosphate (OMP). This is Orotate phosphoribosyltransferase from Sulfurovum sp. (strain NBC37-1).